A 353-amino-acid chain; its full sequence is MTAILERRESESLWGRFCNWITSTENRLYIGWFGVLMIPTLLTATSVFIIAFIAAPPVDIDGIREPVSGSLLYGNNIISGAIIPTSAAIGLHFYPIWEAASVDEWLYNGGPYELIVLHFLLGVACYMGREWELSFRLGMRPWIAVAYSAPVAAATAVFLIYPIGQGSFSDGMPLGISGTFNFMIVFQAEHNILMHPFHMLGVAGVFGGSLFSAMHGSLVTSSLIRETTENESANEGYRFGQEEETYNIVAAHGYFGRLIFQYASFNNSRSLHFFLAAWPVVGIWFTALGISTMAFNLNGFNFNQSVVDSQGRVINTWADIINRANLGMEVMHERNAHNFPLDLAAIDAPSING.

Threonine 2 bears the N-acetylthreonine mark. Threonine 2 bears the Phosphothreonine mark. Transmembrane regions (helical) follow at residues 29–46, 118–133, and 142–156; these read YIGW…TATS, HFLL…EWEL, and WIAV…AATA. Histidine 118 contacts chlorophyll a. Residue tyrosine 126 coordinates pheophytin a. 2 residues coordinate [CaMn4O5] cluster: aspartate 170 and glutamate 189. Residues 197–218 form a helical membrane-spanning segment; sequence FHMLGVAGVFGGSLFSAMHGSL. Histidine 198 is a chlorophyll a binding site. Residues histidine 215 and 264–265 contribute to the a quinone site; that span reads SF. Histidine 215 is a Fe cation binding site. A Fe cation-binding site is contributed by histidine 272. Residues 274-288 traverse the membrane as a helical segment; it reads FLAAWPVVGIWFTAL. 4 residues coordinate [CaMn4O5] cluster: histidine 332, glutamate 333, aspartate 342, and alanine 344. Positions 345-353 are excised as a propeptide; sequence AIDAPSING.

This sequence belongs to the reaction center PufL/M/PsbA/D family. PSII is composed of 1 copy each of membrane proteins PsbA, PsbB, PsbC, PsbD, PsbE, PsbF, PsbH, PsbI, PsbJ, PsbK, PsbL, PsbM, PsbT, PsbX, PsbY, PsbZ, Psb30/Ycf12, at least 3 peripheral proteins of the oxygen-evolving complex and a large number of cofactors. It forms dimeric complexes. Requires The D1/D2 heterodimer binds P680, chlorophylls that are the primary electron donor of PSII, and subsequent electron acceptors. It shares a non-heme iron and each subunit binds pheophytin, quinone, additional chlorophylls, carotenoids and lipids. D1 provides most of the ligands for the Mn4-Ca-O5 cluster of the oxygen-evolving complex (OEC). There is also a Cl(-1) ion associated with D1 and D2, which is required for oxygen evolution. The PSII complex binds additional chlorophylls, carotenoids and specific lipids. as cofactor. In terms of processing, tyr-161 forms a radical intermediate that is referred to as redox-active TyrZ, YZ or Y-Z. C-terminally processed by CTPA; processing is essential to allow assembly of the oxygen-evolving complex and thus photosynthetic growth.

It localises to the plastid. It is found in the chloroplast thylakoid membrane. The enzyme catalyses 2 a plastoquinone + 4 hnu + 2 H2O = 2 a plastoquinol + O2. Photosystem II (PSII) is a light-driven water:plastoquinone oxidoreductase that uses light energy to abstract electrons from H(2)O, generating O(2) and a proton gradient subsequently used for ATP formation. It consists of a core antenna complex that captures photons, and an electron transfer chain that converts photonic excitation into a charge separation. The D1/D2 (PsbA/PsbD) reaction center heterodimer binds P680, the primary electron donor of PSII as well as several subsequent electron acceptors. In Glycine max (Soybean), this protein is Photosystem II protein D1.